The primary structure comprises 345 residues: L-threonine 3-dehydrogenase (345 aa).

A Zn(2+)-binding site is contributed by Cys39. Catalysis depends on charge relay system residues Thr41 and His44. Residues His64, Glu65, Cys94, Cys97, Cys100, and Cys108 each coordinate Zn(2+). NAD(+)-binding positions include Ile176, Asp196, Arg201, 263-265 (LGI), and 287-288 (VY).

It belongs to the zinc-containing alcohol dehydrogenase family. In terms of assembly, homotetramer. It depends on Zn(2+) as a cofactor.

It localises to the cytoplasm. It catalyses the reaction L-threonine + NAD(+) = (2S)-2-amino-3-oxobutanoate + NADH + H(+). The protein operates within amino-acid degradation; L-threonine degradation via oxydo-reductase pathway; glycine from L-threonine: step 1/2. Its function is as follows. Catalyzes the NAD(+)-dependent oxidation of L-threonine to 2-amino-3-ketobutyrate. The protein is L-threonine 3-dehydrogenase of Anaeromyxobacter sp. (strain K).